The primary structure comprises 349 residues: MSGPELGRLIDEVDRTVDVQFAAAGDLDELNRLYASLLGRRGSLNALMKQLPGAAPEERKALGQRLNAVKGRVERAREEATARIKRAARDRELSAPPLDITLPGRWRAPGRPHPIMRTLDEIVDIFVGLGFDVAEGPQIELARYNFDLLGFPADHPAMDMHDTFYMAGDPGQNVLLRTHTSPVQVREMLSHPPPVMIVAPGVVYRRDDDASHSPMFVQIEGLVVDRDVSLADLKGLLEVYSRRMFGEATRTRFRPSYFPFTEPSAELDVSCLVCFGENRACPQCKGTGWLEVLGCGMVHPTVLRNVGIDPEEYTGLAFGIGVDRTANMKFAVDDIRAFYENDVRFLGSL.

Residue Glu-262 participates in Mg(2+) binding.

This sequence belongs to the class-II aminoacyl-tRNA synthetase family. Phe-tRNA synthetase alpha subunit type 1 subfamily. Tetramer of two alpha and two beta subunits. Requires Mg(2+) as cofactor.

Its subcellular location is the cytoplasm. The catalysed reaction is tRNA(Phe) + L-phenylalanine + ATP = L-phenylalanyl-tRNA(Phe) + AMP + diphosphate + H(+). The chain is Phenylalanine--tRNA ligase alpha subunit from Sorangium cellulosum (strain So ce56) (Polyangium cellulosum (strain So ce56)).